We begin with the raw amino-acid sequence, 326 residues long: Adenosine receptor A1 (326 aa).

The Extracellular segment spans residues 1 to 10; sequence MPPAISAFQA. Residues 11–33 form a helical membrane-spanning segment; it reads AYIGIEVLIALVSVPGNVLVIWA. The Cytoplasmic portion of the chain corresponds to 34–46; sequence VKVNQALRDATFC. A helical transmembrane segment spans residues 47–69; the sequence is FIVSLAVADVAVGALVIPLAILI. Residues 70–80 are Extracellular-facing; the sequence is NIGPRTYFHTC. A disulfide bond links Cys-80 and Cys-169. A helical membrane pass occupies residues 81 to 102; the sequence is LMVACPVLILTQSSILALLAIA. Residues 103–123 lie on the Cytoplasmic side of the membrane; sequence VDRYLRVKIPLRYKTVVTPRR. The helical transmembrane segment at 124 to 146 threads the bilayer; that stretch reads AAVAIAGCWILSFVVGLTPLFGW. Topologically, residues 147–176 are extracellular; it reads NRLGEAQRAWAANGSGGEPVIKCEFEKVIS. Asn-159 carries an N-linked (GlcNAc...) asparagine glycan. Residues 177–201 traverse the membrane as a helical segment; the sequence is MEYMVYFNFFVWVLPPLLLMVLIYL. The Cytoplasmic segment spans residues 202–235; it reads EVFYLIRRQLGKKVSASSGDPQKYYGKELKIAKS. A helical transmembrane segment spans residues 236–259; that stretch reads LALILFLFALSWLPLHILNCITLF. Topologically, residues 260 to 267 are extracellular; the sequence is CPSCRKPS. The helical transmembrane segment at 268–292 threads the bilayer; the sequence is ILMYIAIFLTHGNSAMNPIVYAFRI. The Cytoplasmic portion of the chain corresponds to 293–326; it reads QKFRVTFLKIWNDHFRCQPTPPVDEDPPEEAPHD. Residue Cys-309 is the site of S-palmitoyl cysteine attachment.

Belongs to the G-protein coupled receptor 1 family.

The protein localises to the cell membrane. Its function is as follows. Receptor for adenosine. The activity of this receptor is mediated by G proteins which inhibit adenylyl cyclase. This chain is Adenosine receptor A1 (ADORA1), found in Canis lupus familiaris (Dog).